The following is a 243-amino-acid chain: Ubiquinone/menaquinone biosynthesis C-methyltransferase UbiE (243 aa).

S-adenosyl-L-methionine-binding positions include T69, D90, and 116-117 (DA).

This sequence belongs to the class I-like SAM-binding methyltransferase superfamily. MenG/UbiE family.

It catalyses the reaction a 2-demethylmenaquinol + S-adenosyl-L-methionine = a menaquinol + S-adenosyl-L-homocysteine + H(+). The enzyme catalyses a 2-methoxy-6-(all-trans-polyprenyl)benzene-1,4-diol + S-adenosyl-L-methionine = a 5-methoxy-2-methyl-3-(all-trans-polyprenyl)benzene-1,4-diol + S-adenosyl-L-homocysteine + H(+). Its pathway is quinol/quinone metabolism; menaquinone biosynthesis; menaquinol from 1,4-dihydroxy-2-naphthoate: step 2/2. The protein operates within cofactor biosynthesis; ubiquinone biosynthesis. In terms of biological role, methyltransferase required for the conversion of demethylmenaquinol (DMKH2) to menaquinol (MKH2) and the conversion of 2-polyprenyl-6-methoxy-1,4-benzoquinol (DDMQH2) to 2-polyprenyl-3-methyl-6-methoxy-1,4-benzoquinol (DMQH2). This Cupriavidus taiwanensis (strain DSM 17343 / BCRC 17206 / CCUG 44338 / CIP 107171 / LMG 19424 / R1) (Ralstonia taiwanensis (strain LMG 19424)) protein is Ubiquinone/menaquinone biosynthesis C-methyltransferase UbiE.